A 331-amino-acid polypeptide reads, in one-letter code: Dioxygenase swnH2 (331 aa).

Residues 1 to 11 (MINSDAQSAQK) show a composition bias toward polar residues. Residues 1–31 (MINSDAQSAQKQVEVEKPDEKYSAPRLLPPI) form a disordered region. The segment covering 13–23 (VEVEKPDEKYS) has biased composition (basic and acidic residues). Residues histidine 173, aspartate 175, and histidine 250 each coordinate Fe cation.

This sequence belongs to the PhyH family. As to quaternary structure, homodimer. Requires Fe cation as cofactor.

The protein operates within mycotoxin biosynthesis. Dioxygenase; part of the gene cluster that mediates the biosynthesis of swainsonine (SW), a cytotoxic fungal alkaloid and a potential cancer therapy drug. Swainsonine production occurs via a multibranched pathway and is dispensable for fungal colonization of plants and infection of insect hosts. The first step of swainsonine biosynthesis is the production of the precursor pipecolic acid (PA) via conversion of L-lysine (Lys) to 1-piperideine-6-carboxylate (P6C) by the aminotransferase swnA, the latter being further reduced to PA by the reductase swnR. PA can be converted from lysine by both the SW biosynthetic cluster and the unclustered genes such as lysine cyclodeaminase. The PKS-NRPS hybrid synthetase swnK uptakes and condensates PA and malonyl-CoA with and without skipping of the ketoreductase (KR) domain in order to produce 3 intermediates, 1-oxoindolizidine, (1S)-1-hydroxyindolizin, and (1R)-1-hydroxyindolizine; with the transisomer (1S)-1-hydroxyindolizin being predominant. The terminal thioester reductase (TE) domain of swnK is involved in reduction of the thioester bond to release the intermediate aldehydes. The oxidoreductase swnN could contribute to the reduction of 1-oxoindolizidine to (1S)-1-hydroxyindolizin and (1R)-1-hydroxyindolizine, contributing to the major route of SW production. The dioxygenase swnH2 would be responsible for the oxidization of (1R)-1-hydroxyindolizine into (1R,2S)-1,2-dihydroxyindolizine and of (1S)-1-hydroxyindolizin to yield both (1R,2S)-1,2-dihydroxyindolizine and (1S,2S)-1,2-dihydroxyindolizine. The dioxygenase swnH1 then performs the conversion of the 1,2-dihydroxyindolizine epimers to SW. In Metarhizium robertsii (strain ARSEF 23 / ATCC MYA-3075) (Metarhizium anisopliae (strain ARSEF 23)), this protein is Dioxygenase swnH2.